A 288-amino-acid chain; its full sequence is RanBP2-type zinc finger protein At1g67325 (288 aa).

The span at 1-11 shows a compositional bias: polar residues; the sequence is MSQVDNRNSSA. Disordered stretches follow at residues 1 to 24, 52 to 77, 176 to 198, 222 to 248, and 265 to 288; these read MSQV…RRED, PADH…GAYL, MPRP…DNDW, PKPG…WKCD, and NCGA…ENDQ. Residues 15–24 are compositionally biased toward basic and acidic residues; that stretch reads ARTDGGRRED. RanBP2-type zinc fingers lie at residues 22 to 53, 194 to 225, and 241 to 272; these read REDD…PRPA, RDND…PKPG, and PEGS…DKPG. The segment covering 181 to 197 has biased composition (basic and acidic residues); it reads FYPDEKSQKRDSTRDND. Residues 223–241 are compositionally biased toward polar residues; that stretch reads KPGSQQGGSSDKISKQNAP. S278 is modified (phosphoserine).

The polypeptide is RanBP2-type zinc finger protein At1g67325 (Arabidopsis thaliana (Mouse-ear cress)).